The following is a 123-amino-acid chain: Large ribosomal subunit protein bL19 (123 aa).

This sequence belongs to the bacterial ribosomal protein bL19 family.

This protein is located at the 30S-50S ribosomal subunit interface and may play a role in the structure and function of the aminoacyl-tRNA binding site. The polypeptide is Large ribosomal subunit protein bL19 (Laribacter hongkongensis (strain HLHK9)).